A 279-amino-acid chain; its full sequence is Probable endonuclease 4 (279 aa).

The Zn(2+) site is built by histidine 74, histidine 112, glutamate 147, aspartate 180, histidine 183, histidine 214, aspartate 227, histidine 229, and glutamate 259.

Belongs to the AP endonuclease 2 family. The cofactor is Zn(2+).

It carries out the reaction Endonucleolytic cleavage to 5'-phosphooligonucleotide end-products.. Endonuclease IV plays a role in DNA repair. It cleaves phosphodiester bonds at apurinic or apyrimidinic (AP) sites, generating a 3'-hydroxyl group and a 5'-terminal sugar phosphate. The protein is Probable endonuclease 4 of Mycoplasma mobile (strain ATCC 43663 / 163K / NCTC 11711) (Mesomycoplasma mobile).